Consider the following 177-residue polypeptide: Large ribosomal subunit protein uL6 (177 aa).

As to quaternary structure, part of the 50S ribosomal subunit.

Functionally, this protein binds to the 23S rRNA, and is important in its secondary structure. It is located near the subunit interface in the base of the L7/L12 stalk, and near the tRNA binding site of the peptidyltransferase center. This Rhodopseudomonas palustris (strain ATCC BAA-98 / CGA009) protein is Large ribosomal subunit protein uL6.